Here is a 298-residue protein sequence, read N- to C-terminus: Cyclin-D4-2 (298 aa).

This sequence belongs to the cyclin family. Cyclin D subfamily. Interacts with CDKA-1 to form a kinase complex.

Its function is as follows. May promote cell division. This chain is Cyclin-D4-2 (CYCD4-2), found in Arabidopsis thaliana (Mouse-ear cress).